The chain runs to 666 residues: Translation factor guf1, mitochondrial (666 aa).

Residues Met1 to Trp43 constitute a mitochondrion transit peptide. In terms of domain architecture, tr-type G spans Asp68–Val248. Residues Ala77–Ser84, Asp141–His145, and Asn195–Asp198 contribute to the GTP site.

Belongs to the TRAFAC class translation factor GTPase superfamily. Classic translation factor GTPase family. LepA subfamily.

It localises to the mitochondrion inner membrane. The enzyme catalyses GTP + H2O = GDP + phosphate + H(+). Functionally, promotes mitochondrial protein synthesis. May act as a fidelity factor of the translation reaction, by catalyzing a one-codon backward translocation of tRNAs on improperly translocated ribosomes. Binds to mitochondrial ribosomes in a GTP-dependent manner. The chain is Translation factor guf1, mitochondrial (guf1) from Aspergillus niger (strain ATCC MYA-4892 / CBS 513.88 / FGSC A1513).